Consider the following 290-residue polypeptide: Lipoyl synthase (290 aa).

[4Fe-4S] cluster contacts are provided by C44, C49, C55, C70, C74, C77, and S282. One can recognise a Radical SAM core domain in the interval 56–271 (WGEGTATFMI…ELLGKEMGFR (216 aa)).

The protein belongs to the radical SAM superfamily. Lipoyl synthase family. It depends on [4Fe-4S] cluster as a cofactor.

Its subcellular location is the cytoplasm. The enzyme catalyses [[Fe-S] cluster scaffold protein carrying a second [4Fe-4S](2+) cluster] + N(6)-octanoyl-L-lysyl-[protein] + 2 oxidized [2Fe-2S]-[ferredoxin] + 2 S-adenosyl-L-methionine + 4 H(+) = [[Fe-S] cluster scaffold protein] + N(6)-[(R)-dihydrolipoyl]-L-lysyl-[protein] + 4 Fe(3+) + 2 hydrogen sulfide + 2 5'-deoxyadenosine + 2 L-methionine + 2 reduced [2Fe-2S]-[ferredoxin]. The protein operates within protein modification; protein lipoylation via endogenous pathway; protein N(6)-(lipoyl)lysine from octanoyl-[acyl-carrier-protein]: step 2/2. In terms of biological role, catalyzes the radical-mediated insertion of two sulfur atoms into the C-6 and C-8 positions of the octanoyl moiety bound to the lipoyl domains of lipoate-dependent enzymes, thereby converting the octanoylated domains into lipoylated derivatives. The protein is Lipoyl synthase of Flavobacterium psychrophilum (strain ATCC 49511 / DSM 21280 / CIP 103535 / JIP02/86).